The sequence spans 210 residues: Claudin-4 (210 aa).

Residues 1-7 (MASMGLQ) lie on the Cytoplasmic side of the membrane. The segment at 1–103 (MASMGLQVLG…GMLLSVVGGK (103 aa)) is interaction with EPHA2. Residues 8 to 28 (VLGISLAVLGWLGIILSCALP) traverse the membrane as a helical segment. At 29–81 (MWRVTAFIGSNIVTAQTSWEGLWMNCVVQSTGQMQCKMYDSMLALPQDLQAAR) the chain is on the extracellular side. Cys-54 and Cys-64 are disulfide-bonded. Residues 82 to 102 (ALMVISIIVGALGMLLSVVGG) traverse the membrane as a helical segment. The Cytoplasmic portion of the chain corresponds to 103-116 (KCTNCMEDETVKAK). Residues 117–137 (IMITAGAVFIVASMLIMVPVS) traverse the membrane as a helical segment. At 138-160 (WTAHNVIRDFYNPMVASGQKREM) the chain is on the extracellular side. Residues 161-181 (GASLYVGWAASGLLLLGGGLL) traverse the membrane as a helical segment. Over 182–210 (CCSCPPRSNDKPYSAKYSAARSVPASNYV) the chain is Cytoplasmic. Phosphotyrosine; by EPHA2 is present on Tyr-209. The interactions with TJP1, TJP2 and TJP3 stretch occupies residues 209–210 (YV).

This sequence belongs to the claudin family. In terms of assembly, can form heteropolymeric strands with other claudins. Interacts with CLDN8. Interacts with CLDN1. Directly interacts with TJP1/ZO-1, TJP2/ZO-2 and TJP3/ZO-3. Interacts with EPHA2; phosphorylates CLDN4 and may regulate tight junctions. Post-translationally, phosphorylated. Phosphorylation by EPHA2 is stimulated by EFNA1 and alters interaction with TJP1. In terms of tissue distribution, expressed primarily in lung and kidney. Present in both cortical and medullar collecting ducts (at protein level).

It is found in the cell junction. It localises to the tight junction. The protein localises to the cell membrane. The enzyme catalyses chloride(in) = chloride(out). It catalyses the reaction bromide(in) = bromide(out). The catalysed reaction is iodide(out) = iodide(in). It carries out the reaction fluoride(in) = fluoride(out). Functionally, can associate with other claudins to regulate tight junction structural and functional strand dynamics. May coassemble with CLDN8 into tight junction strands containing anion-selective channels that convey paracellular chloride permeability in renal collecting ducts. May integrate into CLDN3 strands to modulate localized tight junction barrier properties. May disrupt strand assembly of channel-forming CLDN2 and CLDN15 and inhibit cation conductance. Cannot form tight junction strands on its own. The chain is Claudin-4 from Mus musculus (Mouse).